We begin with the raw amino-acid sequence, 287 residues long: tRNA pseudouridine synthase B (287 aa).

The active-site Nucleophile is the aspartate 38.

It belongs to the pseudouridine synthase TruB family. Type 1 subfamily.

The catalysed reaction is uridine(55) in tRNA = pseudouridine(55) in tRNA. Functionally, responsible for synthesis of pseudouridine from uracil-55 in the psi GC loop of transfer RNAs. The polypeptide is tRNA pseudouridine synthase B (Mycoplasma mobile (strain ATCC 43663 / 163K / NCTC 11711) (Mesomycoplasma mobile)).